The primary structure comprises 286 residues: Ribosomal RNA small subunit methyltransferase A (286 aa).

S-adenosyl-L-methionine contacts are provided by His11, Leu13, Gly44, Glu65, Asp90, and Asn115.

This sequence belongs to the class I-like SAM-binding methyltransferase superfamily. rRNA adenine N(6)-methyltransferase family. RsmA subfamily.

The protein resides in the cytoplasm. The enzyme catalyses adenosine(1518)/adenosine(1519) in 16S rRNA + 4 S-adenosyl-L-methionine = N(6)-dimethyladenosine(1518)/N(6)-dimethyladenosine(1519) in 16S rRNA + 4 S-adenosyl-L-homocysteine + 4 H(+). Its function is as follows. Specifically dimethylates two adjacent adenosines (A1518 and A1519) in the loop of a conserved hairpin near the 3'-end of 16S rRNA in the 30S particle. May play a critical role in biogenesis of 30S subunits. The protein is Ribosomal RNA small subunit methyltransferase A of Nostoc punctiforme (strain ATCC 29133 / PCC 73102).